Reading from the N-terminus, the 341-residue chain is Transcription factor VIP1 (341 aa).

3 disordered regions span residues 1–33 (MEGGGRGPNQTILSEIEHMPEAPRQRISHHRRA), 59–106 (SLDF…PEAR), and 135–156 (SSGEKKKGNHHHSRSNSMDGEM). Positions 1–162 (MEGGGRGPNQ…DGEMSSASFN (162 aa)) are necessary and sufficient for transient T-DNA transformation end expression. Basic and acidic residues predominate over residues 15–24 (EIEHMPEAPR). Over residues 71-80 (QSQQQPQASP) the composition is skewed to low complexity. Serine 79 is modified (phosphoserine). The interval 163–341 (IESILASVSG…PSYMDFTKRG (179 aa)) is involved in homomultimerization and histone H2A binding. Residues 194–257 (DPKRAKRILA…SELNTENKHL (64 aa)) form the bZIP domain. The tract at residues 196–217 (KRAKRILANRQSAARSKERKIR) is basic motif. Residues 198–205 (AKRILANR) carry the Nuclear localization signal motif. A leucine-zipper region spans residues 222–257 (LERKVQTLQNEATTLSAQVTMLQRGTSELNTENKHL). The segment covering 307 to 331 (SQQSAMNQFGNKTNQQMSTNGQPSL) has biased composition (polar residues). Residues 307 to 341 (SQQSAMNQFGNKTNQQMSTNGQPSLPSYMDFTKRG) form a disordered region.

The protein belongs to the bZIP family. As to quaternary structure, forms homomultimers. Interacts with Agrobacterium tumefaciens VirE2 and mediates its translocation to the host nucleus. Binds to VIP2. Forms a complex made of Agrobacterium VirE2, VIP1, VIP2 and single-stranded DNA (ssDNA). The interaction with KAP1 mediates its nuclear import. Binds to the H2A histone RAT5. Interacts with MPK3 and Agrobacterium virF. Forms a complex made of VIP1, VBF and Agrobacterium virE2. Interacts with SCF(VBF) E3 ubiquitin ligase complex. Binds directly to VBF. Forms heterodimers with BZIP34 and BZIP61. Phosphorylated by MPK3. This phosphorylation promotes nuclear localization. In terms of tissue distribution, mostly expressed in dividing cells, present in leaves, roots and seedlings.

The protein localises to the cytoplasm. Its subcellular location is the nucleus. Transcription activator that binds specifically to the VIP1 response elements (VREs) DNA sequence 5'-ACNGCT-3' found in some stress genes (e.g. TRX8 and MYB44), when phosphorylated/activated by MPK3. Required for Agrobacterium VirE2 nuclear import and tumorigenicity. Promotes transient expression of T-DNA in early stages by interacting with VirE2 in complex with the T-DNA and facilitating its translocation to the nucleus, and mediates stable genetic transformation by Agrobacterium by binding H2A histone. Prevents cell differentiation and shoot formation. Limits sulfate utilization efficiency (SUE) and sulfate uptake, especially in low-sulfur conditions. Plays a role in osmosensory response by binding to the 5'-AGCTGT/G-3' DNA sequence found in the promoters of the hypoosmolarity-responsive genes CYP707A1 and CYP707A3. Involved in the negative regulation of touch-induced root bending and salt-dependent root bending. This Arabidopsis thaliana (Mouse-ear cress) protein is Transcription factor VIP1.